We begin with the raw amino-acid sequence, 24 residues long: Caerulein precursor fragment BM1 (24 aa).

As to expression, expressed by the skin glands.

It localises to the secreted. Functionally, antimicrobial peptide. The polypeptide is Caerulein precursor fragment BM1 (Xenopus boumbaensis (Mawa clawed frog)).